The sequence spans 352 residues: Invasion chromosome antigen T (352 aa).

The protein belongs to the IcaT/YfdF family.

It localises to the secreted. In terms of biological role, may contribute to pathogenesis, although some of its characteristics suggest it is a fossil gene. The sequence is that of Invasion chromosome antigen T from Shigella flexneri serotype 5a (strain M90T).